A 445-amino-acid polypeptide reads, in one-letter code: Enolase (445 aa).

Residues histidine 165 and glutamate 174 each coordinate substrate. Glutamate 217 functions as the Proton donor in the catalytic mechanism. Mg(2+)-binding residues include aspartate 252, glutamate 303, and aspartate 330. Substrate contacts are provided by glutamate 303 and aspartate 330. Lysine 355 acts as the Proton acceptor in catalysis. Residues serine 382–serine 385 and lysine 406 each bind substrate.

Belongs to the enolase family. Homodimer. It depends on Mg(2+) as a cofactor.

The protein localises to the cytoplasm. The catalysed reaction is (2R)-2-phosphoglycerate = phosphoenolpyruvate + H2O. It participates in carbohydrate degradation; glycolysis; pyruvate from D-glyceraldehyde 3-phosphate: step 4/5. The chain is Enolase (ENO) from Eimeria tenella (Coccidian parasite).